The primary structure comprises 404 residues: Agnestins biosynthesis cluster transcription factor AgnL10 (404 aa).

A DNA-binding region (zn(2)-C6 fungal-type) is located at residues 23-50 (CNRCAVSKIKCSKEKPACARCAKQDKVC). Disordered regions lie at residues 54 to 83 (ATKR…PTAA), 188 to 209 (ASAS…PSSG), and 294 to 318 (PGPD…AGVD). Residues 57 to 68 (RAGRKRGSRRHN) are compositionally biased toward basic residues. Positions 74–83 (PTTQDLPTAA) are enriched in polar residues. Positions 188 to 197 (ASASSMDPAA) are enriched in low complexity.

Its subcellular location is the nucleus. In terms of biological role, transcription factor that regulates the expression of the gene cluster that mediates the biosynthesis of agnestins, dihydroxy-xanthone metabolites. The sequence is that of Agnestins biosynthesis cluster transcription factor AgnL10 from Paecilomyces divaricatus (Penicillium divaricatum).